The chain runs to 475 residues: FAD-dependent monooxygenase sdgC (475 aa).

The N-terminal stretch at 1–23 (MDKRSFKVIVVGGSIAGLTLAHS) is a signal peptide. Positions 35, 49, and 126 each coordinate FAD. Asparagine 236 carries N-linked (GlcNAc...) asparagine glycosylation. Residue alanine 330 coordinates FAD. Residues 446–466 (ISGVLLLVIPIIALVYGYSVI) traverse the membrane as a helical segment.

The protein belongs to the paxM FAD-dependent monooxygenase family. Requires FAD as cofactor.

The protein resides in the membrane. The protein operates within secondary metabolite biosynthesis. FAD-dependent monooxygenase; part of the gene cluster that mediates the biosynthesis of the polyenes aspernidgulenes. The carbon backbone of aspernidgulenes is synthesized by the HR-PKS sdgA, which accepts acetyl-CoA as the starter unit and performs malonyl-CoA extensions as well as regioselective methylation and reduction. The resulting nonaketide offloads the HR-PKS by intramolecular lactonization to yield the 5,6-dihydro-alpha-pyrone-containing hexaenoic acids preaspernidgulene A1 and A2. The FAD-dependent monooxygenase sdgC then installs the first epoxide on the penultimate double bond. Subsequently, the FAD-dependent monooxygenase sdgF presumably generates a ketone intermediate through Meinwald rearrangement involving a hydride shift. Next, sdgC introduces another epoxide on the last olefin of the ketone intermediate after E/Z isomerization. The epoxide hydrolase sdgD then catalyzes stereospecific cyclization of the 5,6-dihydro-alpha-pyrone and opening of the epoxide ring to form an oxygenated trimethylcyclopentanone and an oxabicyclo[2.2.1]heptane unit. Finally, the bicyclic unit undergoes hydrolytic cleavage, either spontaneously or catalyzed by sdgD, to assemble the dimethyl-gamma-lactone moiety in aspernidgulene A1. The polypeptide is FAD-dependent monooxygenase sdgC (Emericella nidulans (strain FGSC A4 / ATCC 38163 / CBS 112.46 / NRRL 194 / M139) (Aspergillus nidulans)).